Consider the following 439-residue polypeptide: 3-phosphoshikimate 1-carboxyvinyltransferase (439 aa).

3 residues coordinate 3-phosphoshikimate: Lys-29, Ser-30, and Arg-34. Phosphoenolpyruvate is bound at residue Lys-29. The phosphoenolpyruvate site is built by Gly-100 and Arg-128. Ser-173, Ser-174, Gln-175, Ser-201, Asp-321, and Lys-348 together coordinate 3-phosphoshikimate. A phosphoenolpyruvate-binding site is contributed by Gln-175. The Proton acceptor role is filled by Asp-321. Residues Arg-352 and Arg-395 each coordinate phosphoenolpyruvate.

This sequence belongs to the EPSP synthase family. Monomer.

The protein resides in the cytoplasm. It carries out the reaction 3-phosphoshikimate + phosphoenolpyruvate = 5-O-(1-carboxyvinyl)-3-phosphoshikimate + phosphate. It participates in metabolic intermediate biosynthesis; chorismate biosynthesis. In terms of biological role, catalyzes the transfer of the enolpyruvyl moiety of phosphoenolpyruvate (PEP) to the 5-hydroxyl of shikimate-3-phosphate (S3P) to produce enolpyruvyl shikimate-3-phosphate and inorganic phosphate. The polypeptide is 3-phosphoshikimate 1-carboxyvinyltransferase (Halobacterium salinarum (strain ATCC 700922 / JCM 11081 / NRC-1) (Halobacterium halobium)).